A 184-amino-acid chain; its full sequence is MSQETEKDLEQTQNEELVEEAQSDEKKDQEVDPVEAAQAEAAEYKDKYIRAHADFENAKKRLEKDKMNAVAYANESFAKDILAVLDSFENALSAIEGANKENAAEVLEKMQEGVKLTYEQLKKVLEKNSIKEIESKGTFNPEVHQAIMQVDSDEHKTDDIVQVMQKGYTIKDRVLRPAMVSTAK.

The span at 1 to 10 shows a compositional bias: basic and acidic residues; the sequence is MSQETEKDLE. The segment at 1–38 is disordered; sequence MSQETEKDLEQTQNEELVEEAQSDEKKDQEVDPVEAAQ.

It belongs to the GrpE family. Homodimer.

It localises to the cytoplasm. Participates actively in the response to hyperosmotic and heat shock by preventing the aggregation of stress-denatured proteins, in association with DnaK and GrpE. It is the nucleotide exchange factor for DnaK and may function as a thermosensor. Unfolded proteins bind initially to DnaJ; upon interaction with the DnaJ-bound protein, DnaK hydrolyzes its bound ATP, resulting in the formation of a stable complex. GrpE releases ADP from DnaK; ATP binding to DnaK triggers the release of the substrate protein, thus completing the reaction cycle. Several rounds of ATP-dependent interactions between DnaJ, DnaK and GrpE are required for fully efficient folding. The protein is Protein GrpE of Sulfurovum sp. (strain NBC37-1).